Reading from the N-terminus, the 424-residue chain is Serine--tRNA ligase (424 aa).

Residues 109 to 129 (QEDVPYGESEEDNREERKWGD) form a disordered region. 231-233 (TAE) is a binding site for L-serine. Residue 262–264 (RSE) coordinates ATP. Glu285 contributes to the L-serine binding site. Residue 349-352 (EISS) coordinates ATP. An L-serine-binding site is contributed by Ser385.

This sequence belongs to the class-II aminoacyl-tRNA synthetase family. Type-1 seryl-tRNA synthetase subfamily. Homodimer. The tRNA molecule binds across the dimer.

It localises to the cytoplasm. It catalyses the reaction tRNA(Ser) + L-serine + ATP = L-seryl-tRNA(Ser) + AMP + diphosphate + H(+). The enzyme catalyses tRNA(Sec) + L-serine + ATP = L-seryl-tRNA(Sec) + AMP + diphosphate + H(+). Its pathway is aminoacyl-tRNA biosynthesis; selenocysteinyl-tRNA(Sec) biosynthesis; L-seryl-tRNA(Sec) from L-serine and tRNA(Sec): step 1/1. Functionally, catalyzes the attachment of serine to tRNA(Ser). Is also able to aminoacylate tRNA(Sec) with serine, to form the misacylated tRNA L-seryl-tRNA(Sec), which will be further converted into selenocysteinyl-tRNA(Sec). In Shouchella clausii (strain KSM-K16) (Alkalihalobacillus clausii), this protein is Serine--tRNA ligase.